We begin with the raw amino-acid sequence, 157 residues long: Small ribosomal subunit protein uS7 (157 aa).

This sequence belongs to the universal ribosomal protein uS7 family. Part of the 30S ribosomal subunit. Contacts proteins S9 and S11.

In terms of biological role, one of the primary rRNA binding proteins, it binds directly to 16S rRNA where it nucleates assembly of the head domain of the 30S subunit. Is located at the subunit interface close to the decoding center, probably blocks exit of the E-site tRNA. The polypeptide is Small ribosomal subunit protein uS7 (Acidovorax ebreus (strain TPSY) (Diaphorobacter sp. (strain TPSY))).